The chain runs to 466 residues: DNA polymerase delta subunit 3 (466 aa).

A2 carries the N-acetylalanine modification. Disordered stretches follow at residues 169-188 and 199-232; these read NNEL…VSQQ and KAAA…PGKG. Basic and acidic residues predominate over residues 206–217; it reads ETNKETKTEAKE. Residue K258 forms a Glycyl lysine isopeptide (Lys-Gly) (interchain with G-Cter in SUMO); alternate linkage. Residue K258 forms a Glycyl lysine isopeptide (Lys-Gly) (interchain with G-Cter in SUMO2); alternate linkage. A Glycyl lysine isopeptide (Lys-Gly) (interchain with G-Cter in SUMO2) cross-link involves residue K261. Disordered stretches follow at residues 274 to 393 and 406 to 466; these read KLAT…KTYL and ESES…FQRK. T277 is subject to Phosphothreonine. The segment covering 286 to 296 has biased composition (basic and acidic residues); that stretch reads KKAEPVKVLQK. Position 307 is a phosphoserine (S307). Positions 349-361 are enriched in pro residues; it reads PSPPPPPSPPLEP. S407 and S409 each carry phosphoserine. At T411 the chain carries Phosphothreonine. S413 bears the Phosphoserine mark. Over residues 432 to 441 the composition is skewed to basic and acidic residues; the sequence is VKKEPREERK. K433 is covalently cross-linked (Glycyl lysine isopeptide (Lys-Gly) (interchain with G-Cter in SUMO); alternate). Residue K433 forms a Glycyl lysine isopeptide (Lys-Gly) (interchain with G-Cter in SUMO2); alternate linkage. A compositionally biased stretch (polar residues) spans 455 to 466; that stretch reads RQVSITGFFQRK. Positions 456 to 463 match the PIP-box motif; it reads QVSITGFF. Position 458 is a phosphoserine (S458).

As to quaternary structure, component of both the DNA polymerase delta and DNA polymerase zeta complexes. The tetrameric DNA polymerase delta complex (Pol-delta4), which consists of POLD1/p125, POLD2/p50, POLD3/p66/p68 and POLD4/p12, with POLD1 bearing DNA polymerase and 3' to 5' proofreading exonuclease activities. Within this complex, directly interacts with POLD2. Following stress caused by DNA damaging agents or by replication stress, POLD4 is degraded and Pol-delta4 is converted into a trimeric form of the complex (Pol-delta3), which consists of POLD1, POLD2 and POLD3. Pol-delta3 is the major form occurring at S phase replication sites, as well as DNA damage sites. Directly interacts with PCNA, as do POLD1 and POLD4; this interaction stimulates Pol-delta polymerase activity. POLD3 phosphorylation at Ser-458 impairs PCNA binding. Component of the DNA polymerase zeta complex (POLZ), which consists of REV3L, MAD2L2, POLD2 and POLD3, with REV3L bearing DNA polymerase catalytic activity. The DNA polymerase delta complex interacts with POLDIP2; this interaction is probably mediated through direct binding to POLD2. Post-translationally, ubiquitinated, but not targeted to the proteasome. Sumoylated. Sumoylation with SUMO3 may be predominant. In terms of processing, phosphorylation at Ser-458 is catalyzed in vitro by PKA. It is thought to decrease the affinity for PCNA and Pol-delta4 processivity. Can also be phosphorylated in vitro by CDK1-cyclin-A complex, as well as CDK2-cyclin-A and CDK2-cyclin-E complexes. PCNA interferes with CDK-cyclin phosphorylation.

The protein localises to the cytoplasm. It localises to the nucleus. In terms of biological role, accessory component of both the DNA polymerase delta complex and the DNA polymerase zeta complex. As a component of the trimeric and tetrameric DNA polymerase delta complexes (Pol-delta3 and Pol-delta4, respectively), plays a role in high fidelity genome replication, including in lagging strand synthesis, and repair. Required for optimal Pol-delta activity. Stabilizes the Pol-delta complex and plays a major role in Pol-delta stimulation by PCNA. Pol-delta3 and Pol-delta4 are characterized by the absence or the presence of POLD4. They exhibit differences in catalytic activity. Most notably, Pol-delta3 shows higher proofreading activity than Pol-delta4. Although both Pol-delta3 and Pol-delta4 process Okazaki fragments in vitro, Pol-delta3 may also be better suited to fulfill this task, exhibiting near-absence of strand displacement activity compared to Pol-delta4 and stalling on encounter with the 5'-blocking oligonucleotides. Pol-delta3 idling process may avoid the formation of a gap, while maintaining a nick that can be readily ligated. Along with DNA polymerase kappa, DNA polymerase delta carries out approximately half of nucleotide excision repair (NER) synthesis following UV irradiation. In this context, POLD3, along with PCNA and RFC1-replication factor C complex, is required to recruit POLD1, the catalytic subunit of the polymerase delta complex, to DNA damage sites. Under conditions of DNA replication stress, required for the repair of broken replication forks through break-induced replication (BIR). Involved in the translesion synthesis (TLS) of templates carrying O6-methylguanine or abasic sites performed by Pol-delta4, independently of DNA polymerase zeta (REV3L) or eta (POLH). Facilitates abasic site bypass by DNA polymerase delta by promoting extension from the nucleotide inserted opposite the lesion. Also involved in TLS, as a component of the tetrameric DNA polymerase zeta complex. Along with POLD2, dramatically increases the efficiency and processivity of DNA synthesis of the DNA polymerase zeta complex compared to the minimal zeta complex, consisting of only REV3L and REV7. The protein is DNA polymerase delta subunit 3 (POLD3) of Homo sapiens (Human).